The primary structure comprises 267 residues: 2-keto-3-deoxy-L-rhamnonate aldolase (267 aa).

Catalysis depends on H49, which acts as the Proton acceptor. Residue Q151 participates in substrate binding. Residue E153 coordinates Mg(2+). Substrate is bound by residues A178 and D179. D179 is a binding site for Mg(2+).

This sequence belongs to the HpcH/HpaI aldolase family. KDR aldolase subfamily. In terms of assembly, homohexamer. The cofactor is Mg(2+).

The enzyme catalyses 2-dehydro-3-deoxy-L-rhamnonate = (S)-lactaldehyde + pyruvate. Its function is as follows. Catalyzes the reversible retro-aldol cleavage of 2-keto-3-deoxy-L-rhamnonate (KDR) to pyruvate and lactaldehyde. The sequence is that of 2-keto-3-deoxy-L-rhamnonate aldolase from Salmonella agona (strain SL483).